The primary structure comprises 209 residues: Small ribosomal subunit protein uS3 (209 aa).

The region spanning 38 to 107 (IRKVVKNAYS…RVIVNVEEIK (70 aa)) is the KH type-2 domain.

It belongs to the universal ribosomal protein uS3 family. Part of the 30S ribosomal subunit. Forms a tight complex with proteins S10 and S14.

Functionally, binds the lower part of the 30S subunit head. Binds mRNA in the 70S ribosome, positioning it for translation. This Pseudothermotoga lettingae (strain ATCC BAA-301 / DSM 14385 / NBRC 107922 / TMO) (Thermotoga lettingae) protein is Small ribosomal subunit protein uS3.